The primary structure comprises 283 residues: MKQYLELCRRIVSEGEWVANERTGKHCLTVINADLEYDVANNQFPLITTRKSYWKAAIAEFLGYIRGYDNAADFRALGTKTWDANANENAAWLANPHRRGVDDMGRVYGVQGRAWRKPNGETIDQLRKIVNNLTKGIDDRGEILTFFNPGEFDLGCLRPCMHTHTFSLVGDTLHLTSYQRSCDVPLGLNFNQIQVFTFLALMAQITGKKAGKAYHKIVNAHIYEDQLELMRDVQLKREPFPLPKLEINPDIKTLEDLETWVTMDDFKVVGYQSHEPIKYPFSV.

A dUMP-binding site is contributed by R22. The active-site Nucleophile is C160. DUMP is bound by residues R180–D183, N191, and H221–Y223. Residue D183 coordinates (6R)-5,10-methylene-5,6,7,8-tetrahydrofolate. S282 serves as a coordination point for (6R)-5,10-methylene-5,6,7,8-tetrahydrofolate.

It belongs to the thymidylate synthase family. Bacterial-type ThyA subfamily. In terms of assembly, homodimer.

It localises to the cytoplasm. The catalysed reaction is dUMP + (6R)-5,10-methylene-5,6,7,8-tetrahydrofolate = 7,8-dihydrofolate + dTMP. It participates in pyrimidine metabolism; dTTP biosynthesis. In terms of biological role, catalyzes the reductive methylation of 2'-deoxyuridine-5'-monophosphate (dUMP) to 2'-deoxythymidine-5'-monophosphate (dTMP) while utilizing 5,10-methylenetetrahydrofolate (mTHF) as the methyl donor and reductant in the reaction, yielding dihydrofolate (DHF) as a by-product. This enzymatic reaction provides an intracellular de novo source of dTMP, an essential precursor for DNA biosynthesis. This chain is Thymidylate synthase, found in Haemophilus influenzae (strain ATCC 51907 / DSM 11121 / KW20 / Rd).